A 188-amino-acid polypeptide reads, in one-letter code: Pupal cuticle protein Edg-84A (188 aa).

The signal sequence occupies residues 1–17 (MLVKTALFVTLIGLAQA). The segment at 19 to 67 (PLPAKSSGSEDTYDSHPQYSFNYDVQDPETGDVKSQSESRDGDVVHGQY) is disordered. The segment covering 24–41 (SSGSEDTYDSHPQYSFNY) has biased composition (polar residues). Residues 34–100 (HPQYSFNYDV…AVVRREPLSS (67 aa)) enclose the Chitin-binding type R&amp;R domain. Residues 49–62 (GDVKSQSESRDGDV) show a composition bias toward basic and acidic residues.

In terms of tissue distribution, imaginal (anterior) epidermis.

Functionally, component of the cuticle of the pupa of fruit fly. The sequence is that of Pupal cuticle protein Edg-84A (Edg84A) from Drosophila melanogaster (Fruit fly).